The following is a 249-amino-acid chain: Small ribosomal subunit protein eS6 (249 aa).

Lys14 participates in a covalent cross-link: Glycyl lysine isopeptide (Lys-Gly) (interchain with G-Cter in SUMO2). ADP-ribosyl glutamic acid is present on Glu35. A (3R)-3-hydroxyarginine modification is found at Arg137. Residue Ser148 is modified to Phosphoserine. At Lys211 the chain carries N6-acetyllysine. A compositionally biased stretch (basic and acidic residues) spans 217–229 (MKEAKEKRQEQIA). Residues 217-249 (MKEAKEKRQEQIAKRRRLSSLRASTSKSESSQK) are disordered. Residues Ser235 and Ser236 each carry the phosphoserine; by RPS6KA1, RPS6KA3, DAPK1 and PASK modification. The span at 236–249 (SLRASTSKSESSQK) shows a compositional bias: low complexity. Residues Ser240, Ser242, Ser244, and Ser247 each carry the phosphoserine modification.

It belongs to the eukaryotic ribosomal protein eS6 family. In terms of assembly, component of the small ribosomal subunit. Part of the small subunit (SSU) processome, composed of more than 70 proteins and the RNA chaperone small nucleolar RNA (snoRNA) U3. Ribosomal protein S6 is the major substrate of protein kinases in eukaryote ribosomes. The phosphorylation is stimulated by growth factors, tumor promoting agents, and mitogens. It is dephosphorylated at growth arrest. Phosphorylated at Ser-235 and Ser-236 by RPS6KA1 and RPS6KA3; phosphorylation at these sites facilitates the assembly of the pre-initiation complex. In terms of processing, specifically hydroxylated (with R stereochemistry) at C-3 of Arg-137 by KDM8. Post-translationally, mono-ADP-ribosylation at Glu-35 by PARP16 inhibits polysome assembly and mRNA loading, thereby inhibiting protein translation.

Its subcellular location is the cytoplasm. The protein resides in the nucleus. It is found in the nucleolus. Functionally, component of the 40S small ribosomal subunit. Plays an important role in controlling cell growth and proliferation through the selective translation of particular classes of mRNA. Part of the small subunit (SSU) processome, first precursor of the small eukaryotic ribosomal subunit. During the assembly of the SSU processome in the nucleolus, many ribosome biogenesis factors, an RNA chaperone and ribosomal proteins associate with the nascent pre-rRNA and work in concert to generate RNA folding, modifications, rearrangements and cleavage as well as targeted degradation of pre-ribosomal RNA by the RNA exosome. The sequence is that of Small ribosomal subunit protein eS6 (RPS6) from Bos taurus (Bovine).